Reading from the N-terminus, the 473-residue chain is Photosystem II CP43 reaction center protein (473 aa).

The propeptide occupies 1–14; it reads MKTLYSLRRFYHVE. At Thr15 the chain carries N-acetylthreonine. Thr15 is modified (phosphothreonine). Transmembrane regions (helical) follow at residues 69-93, 134-155, 178-200, 255-275, and 291-312; these read LFEV…PHLA, LLGP…KDRN, KALY…RKIT, KPFA…LSYS, and WFNN…ASQA. [CaMn4O5] cluster is bound at residue Glu367. Residues 447–471 form a helical membrane-spanning segment; it reads RARAAAAGFEKGIDRDFEPVLSMTP.

Belongs to the PsbB/PsbC family. PsbC subfamily. As to quaternary structure, PSII is composed of 1 copy each of membrane proteins PsbA, PsbB, PsbC, PsbD, PsbE, PsbF, PsbH, PsbI, PsbJ, PsbK, PsbL, PsbM, PsbT, PsbX, PsbY, PsbZ, Psb30/Ycf12, at least 3 peripheral proteins of the oxygen-evolving complex and a large number of cofactors. It forms dimeric complexes. Binds multiple chlorophylls and provides some of the ligands for the Ca-4Mn-5O cluster of the oxygen-evolving complex. It may also provide a ligand for a Cl- that is required for oxygen evolution. PSII binds additional chlorophylls, carotenoids and specific lipids. serves as cofactor.

It localises to the plastid. Its subcellular location is the chloroplast thylakoid membrane. One of the components of the core complex of photosystem II (PSII). It binds chlorophyll and helps catalyze the primary light-induced photochemical processes of PSII. PSII is a light-driven water:plastoquinone oxidoreductase, using light energy to abstract electrons from H(2)O, generating O(2) and a proton gradient subsequently used for ATP formation. The protein is Photosystem II CP43 reaction center protein of Manihot esculenta (Cassava).